Reading from the N-terminus, the 528-residue chain is Glucans biosynthesis protein G 2 (528 aa).

An N-terminal signal peptide occupies residues methionine 1–glycine 44.

This sequence belongs to the OpgD/OpgG family.

Its subcellular location is the periplasm. It functions in the pathway glycan metabolism; osmoregulated periplasmic glucan (OPG) biosynthesis. Involved in the biosynthesis of osmoregulated periplasmic glucans (OPGs). The chain is Glucans biosynthesis protein G 2 (opgG2) from Shewanella oneidensis (strain ATCC 700550 / JCM 31522 / CIP 106686 / LMG 19005 / NCIMB 14063 / MR-1).